Consider the following 106-residue polypeptide: Iron-sulfur cluster assembly protein CyaY (106 aa).

It belongs to the frataxin family.

In terms of biological role, involved in iron-sulfur (Fe-S) cluster assembly. May act as a regulator of Fe-S biogenesis. The protein is Iron-sulfur cluster assembly protein CyaY of Shigella flexneri serotype 5b (strain 8401).